The sequence spans 414 residues: MLKRLMLASAILPVVSFAESDPLDVLLKKLEEKGVITKEEAKEVKKVAKKHPHLKVKIRLQPRIDFGDIYKENNDYKSRSDFYFRRVRLEISKEWKNIPFGKKLKINFTLHSDKGERDYDYKKGEKEHHSFDPKVKYAYADWTFVDEFAVRIGKNKIPYSRVSLTSSSRQLLIERPYVTEDAKKWLGDYDSNQIMFHGKVAGGIFRYMLSIWDGSTIESKNKTGGTVKADTSLGDAYAIRLEFSPPGFVEKKKDDTGIGEKNKGDVISVGLNYAKNSDFDITDKNIKNEEATVWGGDIFGRFHLGPGALVAQAEYVKMKYDKLDLEEKGYYIQAGYLIPTPYGKFEPAARYEHFKQEDKKNDVTKHKKDIITLGFNHYIKGHKIKWGYNVLFIDNKEKDEKDQTVHQIQMQFYF.

An N-terminal signal peptide occupies residues 1-18; sequence MLKRLMLASAILPVVSFA.

This is an uncharacterized protein from Aquifex aeolicus (strain VF5).